Here is a 448-residue protein sequence, read N- to C-terminus: Asparagine--tRNA ligase (448 aa).

It belongs to the class-II aminoacyl-tRNA synthetase family. Homodimer.

The protein localises to the cytoplasm. The catalysed reaction is tRNA(Asn) + L-asparagine + ATP = L-asparaginyl-tRNA(Asn) + AMP + diphosphate + H(+). The chain is Asparagine--tRNA ligase from Streptococcus mutans serotype c (strain ATCC 700610 / UA159).